The sequence spans 390 residues: Elongation factor Ts 2, mitochondrial (390 aa).

A mitochondrion-targeting transit peptide spans 1-24 (MMIFSTAVLRLCATSRIGAVTKRA). Residues 30-40 (SSASSSSSSSS) are compositionally biased toward low complexity. A disordered region spans residues 30–54 (SSASSSSSSSSPTQSMPPQRYTHHQ).

Belongs to the EF-Ts family.

It is found in the mitochondrion. Associates with the EF-Tu.GDP complex and induces the exchange of GDP to GTP. It remains bound to the aminoacyl-tRNA.EF-Tu.GTP complex up to the GTP hydrolysis stage on the ribosome. This Thalassiosira pseudonana (Marine diatom) protein is Elongation factor Ts 2, mitochondrial.